The sequence spans 372 residues: Anhydro-N-acetylmuramic acid kinase (372 aa).

Position 18–25 (18–25 (GTSLDGID)) interacts with ATP.

The protein belongs to the anhydro-N-acetylmuramic acid kinase family.

The catalysed reaction is 1,6-anhydro-N-acetyl-beta-muramate + ATP + H2O = N-acetyl-D-muramate 6-phosphate + ADP + H(+). It participates in amino-sugar metabolism; 1,6-anhydro-N-acetylmuramate degradation. The protein operates within cell wall biogenesis; peptidoglycan recycling. Functionally, catalyzes the specific phosphorylation of 1,6-anhydro-N-acetylmuramic acid (anhMurNAc) with the simultaneous cleavage of the 1,6-anhydro ring, generating MurNAc-6-P. Is required for the utilization of anhMurNAc either imported from the medium or derived from its own cell wall murein, and thus plays a role in cell wall recycling. This Thiobacillus denitrificans (strain ATCC 25259 / T1) protein is Anhydro-N-acetylmuramic acid kinase.